We begin with the raw amino-acid sequence, 589 residues long: Glutamine--fructose-6-phosphate aminotransferase [isomerizing] (589 aa).

Cysteine 2 acts as the Nucleophile; for GATase activity in catalysis. Residues 2–221 (CGIIGIVSLR…DDELGFITPE (220 aa)) form the Glutamine amidotransferase type-2 domain. SIS domains lie at 286-426 (VIEE…KMEK) and 445-579 (IGEE…PDKP). Lysine 584 serves as the catalytic For Fru-6P isomerization activity.

As to quaternary structure, homodimer.

Its subcellular location is the cytoplasm. It catalyses the reaction D-fructose 6-phosphate + L-glutamine = D-glucosamine 6-phosphate + L-glutamate. In terms of biological role, catalyzes the first step in hexosamine metabolism, converting fructose-6P into glucosamine-6P using glutamine as a nitrogen source. This is Glutamine--fructose-6-phosphate aminotransferase [isomerizing] from Sulfurisphaera tokodaii (strain DSM 16993 / JCM 10545 / NBRC 100140 / 7) (Sulfolobus tokodaii).